We begin with the raw amino-acid sequence, 565 residues long: Periplasmic trehalase (565 aa).

The first 30 residues, Met1–Ala30, serve as a signal peptide directing secretion. Substrate-binding positions include Arg152, Trp159–Asp160, Asn196, Arg205–Gln207, Arg277–Glu279, and Gly310. Residues Asp312 and Glu496 each act as proton donor/acceptor in the active site. Position 511 (Glu511) interacts with substrate. Residues Asp540–Pro565 form a disordered region. The segment covering Thr548–Pro565 has biased composition (polar residues).

This sequence belongs to the glycosyl hydrolase 37 family. In terms of assembly, monomer.

Its subcellular location is the periplasm. The catalysed reaction is alpha,alpha-trehalose + H2O = alpha-D-glucose + beta-D-glucose. Its function is as follows. Provides the cells with the ability to utilize trehalose at high osmolarity by splitting it into glucose molecules that can subsequently be taken up by the phosphotransferase-mediated uptake system. In Shigella flexneri, this protein is Periplasmic trehalase.